The sequence spans 861 residues: DNA mismatch repair protein MutS (861 aa).

617 to 624 (GPNMGGKS) serves as a coordination point for ATP. A disordered region spans residues 799 to 822 (ETTSLPHEQPPAAKAKDAPQVPHQ). Low complexity predominate over residues 808-820 (PPAAKAKDAPQVP).

The protein belongs to the DNA mismatch repair MutS family.

Its function is as follows. This protein is involved in the repair of mismatches in DNA. It is possible that it carries out the mismatch recognition step. This protein has a weak ATPase activity. The sequence is that of DNA mismatch repair protein MutS from Pseudomonas putida (strain GB-1).